A 267-amino-acid chain; its full sequence is 4-hydroxy-tetrahydrodipicolinate reductase (267 aa).

NAD(+) is bound at residue 10–15 (GCLGKQ). An NADP(+)-binding site is contributed by Arg37. Residues 99 to 101 (GTT) and 122 to 125 (TTNV) contribute to the NAD(+) site. Residue His154 is the Proton donor/acceptor of the active site. His155 lines the (S)-2,3,4,5-tetrahydrodipicolinate pocket. Lys158 serves as the catalytic Proton donor. Residue 164 to 165 (GT) coordinates (S)-2,3,4,5-tetrahydrodipicolinate.

Belongs to the DapB family.

It localises to the cytoplasm. The enzyme catalyses (S)-2,3,4,5-tetrahydrodipicolinate + NAD(+) + H2O = (2S,4S)-4-hydroxy-2,3,4,5-tetrahydrodipicolinate + NADH + H(+). It catalyses the reaction (S)-2,3,4,5-tetrahydrodipicolinate + NADP(+) + H2O = (2S,4S)-4-hydroxy-2,3,4,5-tetrahydrodipicolinate + NADPH + H(+). It functions in the pathway amino-acid biosynthesis; L-lysine biosynthesis via DAP pathway; (S)-tetrahydrodipicolinate from L-aspartate: step 4/4. Its function is as follows. Catalyzes the conversion of 4-hydroxy-tetrahydrodipicolinate (HTPA) to tetrahydrodipicolinate. This chain is 4-hydroxy-tetrahydrodipicolinate reductase, found in Ehrlichia chaffeensis (strain ATCC CRL-10679 / Arkansas).